Here is a 110-residue protein sequence, read N- to C-terminus: Large ribosomal subunit protein uL22 (110 aa).

This sequence belongs to the universal ribosomal protein uL22 family. As to quaternary structure, part of the 50S ribosomal subunit.

This protein binds specifically to 23S rRNA; its binding is stimulated by other ribosomal proteins, e.g. L4, L17, and L20. It is important during the early stages of 50S assembly. It makes multiple contacts with different domains of the 23S rRNA in the assembled 50S subunit and ribosome. In terms of biological role, the globular domain of the protein is located near the polypeptide exit tunnel on the outside of the subunit, while an extended beta-hairpin is found that lines the wall of the exit tunnel in the center of the 70S ribosome. The polypeptide is Large ribosomal subunit protein uL22 (Shewanella frigidimarina (strain NCIMB 400)).